The primary structure comprises 457 residues: Multidrug resistance protein MdtK (457 aa).

Over Met1–Leu10 the chain is Cytoplasmic. Residues Leu11–Val31 form a helical membrane-spanning segment. The Periplasmic segment spans residues Asp32 to Ser52. A helical membrane pass occupies residues Ile53–Ala73. The Cytoplasmic portion of the chain corresponds to Gln74–Phe92. Residues Trp93–Ile113 form a helical membrane-spanning segment. Topologically, residues Arg114–Lys126 are periplasmic. The chain crosses the membrane as a helical span at residues Ala127–Ala147. Residues Arg148–Pro159 are Cytoplasmic-facing. The helical transmembrane segment at Gly160–Tyr180 threads the bilayer. Residues Gly181–Leu188 lie on the Periplasmic side of the membrane. Residues Gly189–Val209 form a helical membrane-spanning segment. Residues Ser210 to Gly242 lie on the Cytoplasmic side of the membrane. Residues Leu243 to Val263 form a helical membrane-spanning segment. At Ser264 to Gln275 the chain is on the periplasmic side. Residues Ile276 to Thr296 form a helical membrane-spanning segment. Topologically, residues Ile297–Thr313 are cytoplasmic. The chain crosses the membrane as a helical span at residues Ala314–Val334. Residues Ser335–Glu349 lie on the Periplasmic side of the membrane. The helical transmembrane segment at Val350–Ile370 threads the bilayer. Residues Gln371 to Ser386 lie on the Cytoplasmic side of the membrane. Residues Ile387–Ala407 traverse the membrane as a helical segment. Residues Leu408–Gly417 lie on the Periplasmic side of the membrane. The helical transmembrane segment at Pro418–Leu438 threads the bilayer. Residues Arg439 to Arg457 lie on the Cytoplasmic side of the membrane.

Belongs to the multi antimicrobial extrusion (MATE) (TC 2.A.66.1) family. MdtK subfamily.

It is found in the cell inner membrane. Multidrug efflux pump that functions probably as a Na(+)/drug antiporter. In Shigella boydii serotype 4 (strain Sb227), this protein is Multidrug resistance protein MdtK.